The following is a 354-amino-acid chain: Ferrochelatase (354 aa).

2 residues coordinate Fe cation: histidine 214 and glutamate 295.

Belongs to the ferrochelatase family.

The protein resides in the cytoplasm. It carries out the reaction heme b + 2 H(+) = protoporphyrin IX + Fe(2+). Its pathway is porphyrin-containing compound metabolism; protoheme biosynthesis; protoheme from protoporphyrin-IX: step 1/1. Functionally, catalyzes the ferrous insertion into protoporphyrin IX. The sequence is that of Ferrochelatase from Burkholderia orbicola (strain AU 1054).